The primary structure comprises 88 residues: MLKYVVTDIGKMCLYIWPYRVWSWRRLFIFRVLNVVSIAILFETPHRLALVLNVCLYTHISMCLYNCYCLYNVVTFSLNLILISMTFI.

A run of 2 helical transmembrane segments spans residues 27 to 46 (LFIF…ETPH) and 61 to 83 (SMCL…LILI).

It is found in the membrane. This is an uncharacterized protein from Saccharomyces cerevisiae (strain ATCC 204508 / S288c) (Baker's yeast).